A 68-amino-acid polypeptide reads, in one-letter code: Large ribosomal subunit protein uL29 (68 aa).

It belongs to the universal ribosomal protein uL29 family.

The polypeptide is Large ribosomal subunit protein uL29 (Geobacillus sp. (strain WCH70)).